Consider the following 305-residue polypeptide: Cytochrome c biogenesis protein CcsA (305 aa).

The next 8 helical transmembrane spans lie at 11-31 (GLGF…FWAV), 37-57 (TGIV…QLVL), 63-83 (GHFP…ACTL), 96-116 (IVAA…SFAL), 141-161 (VIMV…AVLL), 212-232 (TITV…VWAN), 246-263 (TWAL…HTRL), and 275-295 (VAVV…LLGI).

It belongs to the CcmF/CycK/Ccl1/NrfE/CcsA family. In terms of assembly, may interact with ccs1.

Its subcellular location is the cellular thylakoid membrane. Its function is as follows. Required during biogenesis of c-type cytochromes (cytochrome c6 and cytochrome f) at the step of heme attachment. The polypeptide is Cytochrome c biogenesis protein CcsA (Parasynechococcus marenigrum (strain WH8102)).